The primary structure comprises 612 residues: Serine/threonine-protein kinase Nek1 (612 aa).

One can recognise a Protein kinase domain in the interval 4-258; sequence YEFLEQIGKG…ASDLLRHPHL (255 aa). ATP-binding positions include 10-18 and Lys-33; that span reads IGKGSFGSA. The active-site Proton acceptor is Asp-129. The span at 503–513 shows a compositional bias: polar residues; sequence ISDGSSSSDQN. The interval 503–534 is disordered; sequence ISDGSSSSDQNATAGASSHTTSSSSRRCRFDP. Residues 514–527 show a composition bias toward low complexity; that stretch reads ATAGASSHTTSSSS.

The protein belongs to the protein kinase superfamily. NEK Ser/Thr protein kinase family. NIMA subfamily.

The catalysed reaction is L-seryl-[protein] + ATP = O-phospho-L-seryl-[protein] + ADP + H(+). It catalyses the reaction L-threonyl-[protein] + ATP = O-phospho-L-threonyl-[protein] + ADP + H(+). May be involved in plant development processes. This Arabidopsis thaliana (Mouse-ear cress) protein is Serine/threonine-protein kinase Nek1 (NEK1).